Here is a 1211-residue protein sequence, read N- to C-terminus: Homeodomain-interacting protein kinase 1 (1211 aa).

Residue K25 forms a Glycyl lysine isopeptide (Lys-Gly) (interchain with G-Cter in SUMO); alternate linkage. Residue K25 forms a Glycyl lysine isopeptide (Lys-Gly) (interchain with G-Cter in SUMO2); alternate linkage. Glycyl lysine isopeptide (Lys-Gly) (interchain with G-Cter in SUMO2) cross-links involve residues K120 and K124. The Protein kinase domain occupies 190–518; the sequence is YEVLEFLGRG…PLKTLNHQFV (329 aa). ATP contacts are provided by residues 196 to 204 and K219; that span reads LGRGTFGQV. D315 serves as the catalytic Proton acceptor. The interval 835-856 is disordered; it reads QQQSSSLPSRKNKQSAPVSSTS. A Nuclear localization signal 1 (NLS1) motif is present at residues 844 to 847; it reads RKNK. At S872 the chain carries Phosphoserine. Residues 885–1094 are interaction with TP53; sequence PVQDQHQPII…FQHGSPLHST (210 aa). Positions 891-998 are required for localization to nuclear speckles; sequence QPIIIPDTPS…PLKTQLGDCT (108 aa). The interval 902–926 is SUMO interaction motifs (SIM); required for nuclear localization and kinase activity; sequence PVSVITIRSDTDEEEDNKFKPSSSS. K991 is covalently cross-linked (Glycyl lysine isopeptide (Lys-Gly) (interchain with G-Cter in SUMO2)). Disordered stretches follow at residues 1002 to 1023, 1047 to 1070, and 1085 to 1105; these read QASG…GQSS, LSQN…APRR, and FQHG…APAH. Low complexity-rich tracts occupy residues 1048 to 1064 and 1096 to 1105; these read SQNQ…ERSS and HPHLAPAPAH. Phosphoserine is present on S1201. K1204 participates in a covalent cross-link: Glycyl lysine isopeptide (Lys-Gly) (interchain with G-Cter in SUMO).

Belongs to the protein kinase superfamily. CMGC Ser/Thr protein kinase family. HIPK subfamily. In terms of assembly, interacts with Nkx1-2, Nkx2-5, MYB, PARK7, DAXX and p53/TP53. Part of a cytoplasmic complex made of HIPK1, DAB2IP and MAP3K5 in response to TNF. This complex formation promotes MAP3K5-JNK activation and subsequent apoptosis. Post-translationally, phosphorylated and activated by JNK1. Autophosphorylated. Sumoylated. When conjugated it is directed to nuclear speckles. SENP1-mediated desumoylation is mediated by TNF in response to stress stimuli, triggering transient translocation from nucleus to cytoplasm.

Its subcellular location is the nucleus. The protein resides in the cytoplasm. The protein localises to the nucleus speckle. The enzyme catalyses L-seryl-[protein] + ATP = O-phospho-L-seryl-[protein] + ADP + H(+). The catalysed reaction is L-threonyl-[protein] + ATP = O-phospho-L-threonyl-[protein] + ADP + H(+). Its function is as follows. Serine/threonine-protein kinase involved in transcription regulation and TNF-mediated cellular apoptosis. Plays a role as a corepressor for homeodomain transcription factors. Phosphorylates DAXX and MYB. Phosphorylates DAXX in response to stress, and mediates its translocation from the nucleus to the cytoplasm. Inactivates MYB transcription factor activity by phosphorylation. Prevents MAP3K5-JNK activation in the absence of TNF. TNF triggers its translocation to the cytoplasm in response to stress stimuli, thus activating nuclear MAP3K5-JNK by derepression and promoting apoptosis. May be involved in anti-oxidative stress responses. Involved in the regulation of eye size, lens formation and retinal lamination during late embryogenesis. Promotes angiogenesis and to be involved in erythroid differentiation. May be involved in malignant squamous cell tumor formation. Phosphorylates PAGE4 at 'Thr-51' which is critical for the ability of PAGE4 to potentiate the transcriptional activator activity of JUN. This chain is Homeodomain-interacting protein kinase 1, found in Rattus norvegicus (Rat).